Consider the following 115-residue polypeptide: Transmembrane protein 218 (115 aa).

Transmembrane regions (helical) follow at residues 5–25, 38–58, and 81–101; these read VLGVGAGVFLLALIWVLVLLL, FSIVFVFLGALIITTVLLLFP, and YVLLAFLSAVFLGGLFLLLTH.

Belongs to the TMEM218 family. Interacts with TMEM67.

It localises to the membrane. It is found in the cell projection. The protein resides in the cilium. In terms of biological role, may be involved in ciliary biogenesis or function. This is Transmembrane protein 218 (Tmem218) from Mus musculus (Mouse).